Consider the following 122-residue polypeptide: Basic phospholipase A2 Cdr-13 (122 aa).

Cystine bridges form between Cys-26-Cys-115, Cys-28-Cys-44, Cys-43-Cys-95, Cys-49-Cys-122, Cys-50-Cys-88, Cys-57-Cys-81, and Cys-75-Cys-86. Tyr-27, Gly-29, and Gly-31 together coordinate Ca(2+). The active site involves His-47. Asp-48 serves as a coordination point for Ca(2+). The active site involves Asp-89.

Ca(2+) serves as cofactor. Expressed by the venom gland.

It is found in the secreted. It catalyses the reaction a 1,2-diacyl-sn-glycero-3-phosphocholine + H2O = a 1-acyl-sn-glycero-3-phosphocholine + a fatty acid + H(+). Functionally, snake venom phospholipase A2 (PLA2) that induces myonecrosis and edema upon subcutaneous injections in mice. In vitro, causes a potent blockade of neuromuscular transmission in young chicken biventer cervicis preparation and produces cytotoxicity in murine C2C12 skeletal muscle myotubes and lack cytolytic activity upon myoblasts in vitro. PLA2 catalyzes the calcium-dependent hydrolysis of the 2-acyl groups in 3-sn-phosphoglycerides. The protein is Basic phospholipase A2 Cdr-13 of Crotalus durissus ruruima (South American rattlesnake).